A 463-amino-acid chain; its full sequence is Argininosuccinate lyase (463 aa).

This sequence belongs to the lyase 1 family. Argininosuccinate lyase subfamily.

It is found in the cytoplasm. It carries out the reaction 2-(N(omega)-L-arginino)succinate = fumarate + L-arginine. Its pathway is amino-acid biosynthesis; L-arginine biosynthesis; L-arginine from L-ornithine and carbamoyl phosphate: step 3/3. This is Argininosuccinate lyase from Streptococcus pneumoniae serotype 2 (strain D39 / NCTC 7466).